Consider the following 291-residue polypeptide: Small ribosomal subunit protein uS2 (291 aa).

A disordered region spans residues 256–291; the sequence is STTAPPNWEATGGDWATSTAPAEGWAGDAPAGETKW.

Belongs to the universal ribosomal protein uS2 family. In terms of assembly, component of the small ribosomal subunit. Mature ribosomes consist of a small (40S) and a large (60S) subunit. The 40S subunit contains about 33 different proteins and 1 molecule of RNA (18S). The 60S subunit contains about 49 different proteins and 3 molecules of RNA (25S, 5.8S and 5S). Interacts with RPS21.

It is found in the cytoplasm. In terms of biological role, required for the assembly and/or stability of the 40S ribosomal subunit. Required for the processing of the 20S rRNA-precursor to mature 18S rRNA in a late step of the maturation of 40S ribosomal subunits. This chain is Small ribosomal subunit protein uS2, found in Coccidioides immitis (strain RS) (Valley fever fungus).